An 809-amino-acid chain; its full sequence is Ubiquitin carboxyl-terminal hydrolase 1 (809 aa).

Residues 101–738 (AGLVNDGNTC…GVFMLFYEYD (638 aa)) form the USP domain. Cys-110 serves as the catalytic Nucleophile. The tract at residues 143–195 (NEHNEEGNGQESAQDEATHKKNTRKGGKVYGKHKKKLNRKSSSKEDEEKSQEP) is disordered. The span at 162-183 (KKNTRKGGKVYGKHKKKLNRKS) shows a compositional bias: basic residues. Positions 184-194 (SSKEDEEKSQE) are enriched in basic and acidic residues. A phosphoserine mark is found at Ser-530, Ser-531, and Ser-555. Positions 569–596 (ASHYNHTKDISNYDPLNGEVDGVTSDDE) are disordered. Ser-618 and Ser-638 each carry phosphoserine. The residue at position 652 (Thr-652) is a Phosphothreonine. 3 positions are modified to phosphoserine: Ser-653, Ser-654, and Ser-670. His-697 acts as the Proton acceptor in catalysis. Residues 750-809 (LEAIQSNNEEDDEKEQEQKGVQEPKESQEQGEGEEQEEGQEQMKFERTEDHRDISGKDVN) form a disordered region. Residue Ser-755 is modified to Phosphoserine. The span at 765-777 (QEQKGVQEPKESQ) shows a compositional bias: basic and acidic residues. The span at 778–789 (EQGEGEEQEEGQ) shows a compositional bias: acidic residues. Residues 790–809 (EQMKFERTEDHRDISGKDVN) show a composition bias toward basic and acidic residues.

This sequence belongs to the peptidase C19 family.

It carries out the reaction Thiol-dependent hydrolysis of ester, thioester, amide, peptide and isopeptide bonds formed by the C-terminal Gly of ubiquitin (a 76-residue protein attached to proteins as an intracellular targeting signal).. Its function is as follows. Has an ATP-independent isopeptidase activity, cleaving at the C-terminus of the ubiquitin moiety in natural or engineered linear fusion proteins, irrespective of their size or the presence of an N-terminal extension to ubiquitin. This is Ubiquitin carboxyl-terminal hydrolase 1 (UBP1) from Saccharomyces cerevisiae (strain ATCC 204508 / S288c) (Baker's yeast).